Consider the following 471-residue polypeptide: Mannose-1-phosphate guanylyltransferase (471 aa).

This sequence belongs to the mannose-6-phosphate isomerase type 2 family.

The catalysed reaction is alpha-D-mannose 1-phosphate + GTP + H(+) = GDP-alpha-D-mannose + diphosphate. It participates in nucleotide-sugar biosynthesis; GDP-alpha-D-mannose biosynthesis; GDP-alpha-D-mannose from alpha-D-mannose 1-phosphate (GTP route): step 1/1. Involved in GDP-mannose biosynthesis which serves as the activated sugar nucleotide precursor for mannose residues in cell surface polysaccharides. This enzyme participates in synthesis of the LPS O antigen. The chain is Mannose-1-phosphate guanylyltransferase (manC) from Salmonella montevideo.